The chain runs to 635 residues: tRNA 5-methylaminomethyl-2-thiouridine biosynthesis bifunctional protein MnmC (635 aa).

The interval 1–231 is tRNA (mnm(5)s(2)U34)-methyltransferase; the sequence is MPITPASLSF…KRQMLRGRYL (231 aa). The interval 249-635 is FAD-dependent cmnm(5)s(2)U34 oxidoreductase; sequence IGAGVAGTSI…RPARTLRGED (387 aa).

In the N-terminal section; belongs to the methyltransferase superfamily. tRNA (mnm(5)s(2)U34)-methyltransferase family. This sequence in the C-terminal section; belongs to the DAO family. Requires FAD as cofactor.

It localises to the cytoplasm. It catalyses the reaction 5-aminomethyl-2-thiouridine(34) in tRNA + S-adenosyl-L-methionine = 5-methylaminomethyl-2-thiouridine(34) in tRNA + S-adenosyl-L-homocysteine + H(+). Catalyzes the last two steps in the biosynthesis of 5-methylaminomethyl-2-thiouridine (mnm(5)s(2)U) at the wobble position (U34) in tRNA. Catalyzes the FAD-dependent demodification of cmnm(5)s(2)U34 to nm(5)s(2)U34, followed by the transfer of a methyl group from S-adenosyl-L-methionine to nm(5)s(2)U34, to form mnm(5)s(2)U34. This Azoarcus sp. (strain BH72) protein is tRNA 5-methylaminomethyl-2-thiouridine biosynthesis bifunctional protein MnmC.